The following is a 78-amino-acid chain: Acyl carrier protein (78 aa).

The 76-residue stretch at 2 to 77 (SNFEERVKKI…AAIDYVVSSA (76 aa)) folds into the Carrier domain. Ser-37 carries the O-(pantetheine 4'-phosphoryl)serine modification.

The protein belongs to the acyl carrier protein (ACP) family. In terms of processing, 4'-phosphopantetheine is transferred from CoA to a specific serine of apo-ACP by AcpS. This modification is essential for activity because fatty acids are bound in thioester linkage to the sulfhydryl of the prosthetic group.

Its subcellular location is the cytoplasm. The protein operates within lipid metabolism; fatty acid biosynthesis. Its function is as follows. Carrier of the growing fatty acid chain in fatty acid biosynthesis. Is probably involved in the biosynthesis of docosahexaenoic acid (DHA) which is produced by this bacterium as a fatty acyl component in its membrane lipid. This Moritella marina (Vibrio marinus) protein is Acyl carrier protein.